Reading from the N-terminus, the 390-residue chain is Lipid-A-disaccharide synthase (390 aa).

Belongs to the LpxB family.

The catalysed reaction is a lipid X + a UDP-2-N,3-O-bis[(3R)-3-hydroxyacyl]-alpha-D-glucosamine = a lipid A disaccharide + UDP + H(+). Its pathway is bacterial outer membrane biogenesis; LPS lipid A biosynthesis. In terms of biological role, condensation of UDP-2,3-diacylglucosamine and 2,3-diacylglucosamine-1-phosphate to form lipid A disaccharide, a precursor of lipid A, a phosphorylated glycolipid that anchors the lipopolysaccharide to the outer membrane of the cell. The polypeptide is Lipid-A-disaccharide synthase (Haemophilus ducreyi (strain 35000HP / ATCC 700724)).